Reading from the N-terminus, the 515-residue chain is Maturase K (515 aa).

This sequence belongs to the intron maturase 2 family. MatK subfamily.

The protein localises to the plastid. The protein resides in the chloroplast. Its function is as follows. Usually encoded in the trnK tRNA gene intron. Probably assists in splicing its own and other chloroplast group II introns. The protein is Maturase K of Larix laricina (Tamarack).